The sequence spans 428 residues: Dihydroorotase (428 aa).

Zn(2+) is bound by residues His-59 and His-61. Substrate is bound by residues 61-63 and Asn-93; that span reads HLR. Asp-151, His-178, and His-231 together coordinate Zn(2+). Asn-277 provides a ligand contact to substrate. Asp-304 lines the Zn(2+) pocket. Residue Asp-304 is part of the active site. Substrate contacts are provided by residues His-308 and 322–323; that span reads FG.

The protein belongs to the metallo-dependent hydrolases superfamily. DHOase family. Class I DHOase subfamily. Zn(2+) serves as cofactor.

It carries out the reaction (S)-dihydroorotate + H2O = N-carbamoyl-L-aspartate + H(+). It functions in the pathway pyrimidine metabolism; UMP biosynthesis via de novo pathway; (S)-dihydroorotate from bicarbonate: step 3/3. Functionally, catalyzes the reversible cyclization of carbamoyl aspartate to dihydroorotate. This chain is Dihydroorotase, found in Bacillus cereus (strain B4264).